The chain runs to 342 residues: Alanine racemase (342 aa).

The Proton acceptor; specific for D-alanine role is filled by Lys-33. Residue Lys-33 is modified to N6-(pyridoxal phosphate)lysine. Residue Arg-128 coordinates substrate. The active-site Proton acceptor; specific for L-alanine is the Tyr-240. Residue Met-288 coordinates substrate.

Belongs to the alanine racemase family. Pyridoxal 5'-phosphate is required as a cofactor.

The enzyme catalyses L-alanine = D-alanine. Its pathway is amino-acid biosynthesis; D-alanine biosynthesis; D-alanine from L-alanine: step 1/1. Its function is as follows. Catalyzes the interconversion of L-alanine and D-alanine. May also act on other amino acids. The polypeptide is Alanine racemase (alr) (Jannaschia sp. (strain CCS1)).